We begin with the raw amino-acid sequence, 227 residues long: Orotate phosphoribosyltransferase (227 aa).

K34 lines the 5-phospho-alpha-D-ribose 1-diphosphate pocket. 42-43 (FF) serves as a coordination point for orotate. Residues 80–81 (YK), R106, K107, K110, H112, and 131–139 (DDVISAGTS) each bind 5-phospho-alpha-D-ribose 1-diphosphate. 2 residues coordinate orotate: S135 and R163.

It belongs to the purine/pyrimidine phosphoribosyltransferase family. PyrE subfamily. Homodimer. It depends on Mg(2+) as a cofactor.

It catalyses the reaction orotidine 5'-phosphate + diphosphate = orotate + 5-phospho-alpha-D-ribose 1-diphosphate. It participates in pyrimidine metabolism; UMP biosynthesis via de novo pathway; UMP from orotate: step 1/2. Functionally, catalyzes the transfer of a ribosyl phosphate group from 5-phosphoribose 1-diphosphate to orotate, leading to the formation of orotidine monophosphate (OMP). The chain is Orotate phosphoribosyltransferase from Cupriavidus necator (strain ATCC 17699 / DSM 428 / KCTC 22496 / NCIMB 10442 / H16 / Stanier 337) (Ralstonia eutropha).